The chain runs to 279 residues: NADPH-dependent 7-cyano-7-deazaguanine reductase (279 aa).

A substrate-binding site is contributed by 86–88 (IES). NADPH is bound at residue 88–89 (SK). Catalysis depends on Cys-187, which acts as the Thioimide intermediate. Asp-194 serves as the catalytic Proton donor. 226–227 (HE) is a binding site for substrate. 255 to 256 (RG) contacts NADPH.

The protein belongs to the GTP cyclohydrolase I family. QueF type 2 subfamily. As to quaternary structure, homodimer.

The protein resides in the cytoplasm. The enzyme catalyses 7-aminomethyl-7-carbaguanine + 2 NADP(+) = 7-cyano-7-deazaguanine + 2 NADPH + 3 H(+). It functions in the pathway tRNA modification; tRNA-queuosine biosynthesis. Its function is as follows. Catalyzes the NADPH-dependent reduction of 7-cyano-7-deazaguanine (preQ0) to 7-aminomethyl-7-deazaguanine (preQ1). In Histophilus somni (strain 129Pt) (Haemophilus somnus), this protein is NADPH-dependent 7-cyano-7-deazaguanine reductase.